Here is a 39-residue protein sequence, read N- to C-terminus: Conotoxin ArMSGL-013 (39 aa).

A propeptide spanning residues 1-5 (RRSLT) is cleaved from the precursor. Disulfide bonds link Cys-12–Cys-24, Cys-16–Cys-33, and Cys-23–Cys-37. Trp-38 carries the tryptophan amide modification.

This sequence belongs to the conotoxin O3 superfamily. As to expression, expressed by the venom duct.

The protein resides in the secreted. This is Conotoxin ArMSGL-013 from Conus arenatus (Sand-dusted cone).